A 274-amino-acid polypeptide reads, in one-letter code: F-box protein SKIP5 (274 aa).

Positions 32–79 constitute an F-box domain; it reads LTSLNNLDDGCLMHILSFLSPIPDRYNTALVCHRWRYLACHPRLWLRV.

As to quaternary structure, part of a SCF (SKP1-cullin-F-box) protein ligase complex. Interacts with SKP1A/ASK1.

It functions in the pathway protein modification; protein ubiquitination. The chain is F-box protein SKIP5 (SKIP5) from Arabidopsis thaliana (Mouse-ear cress).